A 222-amino-acid chain; its full sequence is Eukaryotic translation initiation factor 3 subunit K (222 aa).

The region spanning 46 to 208 (YDLEANLAVL…KIKTKNITEK (163 aa)) is the PCI domain.

Belongs to the eIF-3 subunit K family. Component of the eukaryotic translation initiation factor 3 (eIF-3) complex. The eIF-3 complex interacts with pix.

The protein localises to the cytoplasm. Component of the eukaryotic translation initiation factor 3 (eIF-3) complex, which is involved in protein synthesis of a specialized repertoire of mRNAs and, together with other initiation factors, stimulates binding of mRNA and methionyl-tRNAi to the 40S ribosome. The eIF-3 complex specifically targets and initiates translation of a subset of mRNAs involved in cell proliferation. The polypeptide is Eukaryotic translation initiation factor 3 subunit K (Drosophila erecta (Fruit fly)).